Here is a 636-residue protein sequence, read N- to C-terminus: DNA-directed RNA polymerase subunit beta' (636 aa).

4 residues coordinate Zn(2+): Cys-70, Cys-72, Cys-85, and Cys-88. Positions 471, 473, and 475 each coordinate Mg(2+).

It belongs to the RNA polymerase beta' chain family. RpoC1 subfamily. Requires Mg(2+) as cofactor. The cofactor is Zn(2+).

The protein resides in the plastid. It is found in the cyanelle. The enzyme catalyses RNA(n) + a ribonucleoside 5'-triphosphate = RNA(n+1) + diphosphate. Its function is as follows. DNA-dependent RNA polymerase catalyzes the transcription of DNA into RNA using the four ribonucleoside triphosphates as substrates. The sequence is that of DNA-directed RNA polymerase subunit beta' from Cyanophora paradoxa.